Consider the following 335-residue polypeptide: Probable cytosolic iron-sulfur protein assembly protein Ciao1 (335 aa).

WD repeat units lie at residues 12 to 51 (GHKG…WSTK), 57 to 96 (GHKR…FECN), 101 to 140 (GHEN…EFEC), 146 to 185 (SHTQ…NDWD), 192 to 231 (SHTS…NSAG), 250 to 289 (QHSR…KPDE), and 301 to 335 (AHDQ…KVTE).

The protein belongs to the WD repeat CIA1 family.

Functionally, essential component of the cytosolic iron-sulfur (Fe/S) protein assembly machinery. Required for the maturation of extramitochondrial Fe/S proteins. This Drosophila erecta (Fruit fly) protein is Probable cytosolic iron-sulfur protein assembly protein Ciao1.